A 384-amino-acid chain; its full sequence is Ribonucleoside-diphosphate reductase small chain (384 aa).

Residues aspartate 130, glutamate 161, and histidine 164 each contribute to the Fe cation site. Tyrosine 168 is an active-site residue. Fe cation is bound by residues glutamate 224, glutamate 258, and histidine 261.

It belongs to the ribonucleoside diphosphate reductase small chain family. As to quaternary structure, heterodimer of a large and a small subunit. It depends on Fe cation as a cofactor.

The enzyme catalyses a 2'-deoxyribonucleoside 5'-diphosphate + [thioredoxin]-disulfide + H2O = a ribonucleoside 5'-diphosphate + [thioredoxin]-dithiol. Provides the precursors necessary for DNA synthesis. Catalyzes the biosynthesis of deoxyribonucleotides from the corresponding ribonucleotides. The polypeptide is Ribonucleoside-diphosphate reductase small chain (Spisula solidissima (Atlantic surf-clam)).